Reading from the N-terminus, the 70-residue chain is Melittin (70 aa).

The first 21 residues, 1 to 21 (MKFLVNVALVFMVVYISFIYA), serve as a signal peptide directing secretion. Residues 22–43 (APEPEPAPEAEAEADAEADPEA) constitute a propeptide, removed by a dipeptidylpeptidase. Position 44 is an N-formylglycine; partial (G44). The residue at position 69 (Q69) is a Glutamine amide.

The protein belongs to the melittin family. As to quaternary structure, monomer (in solution and for integration into membranes), homotetramer (in solution and potentially as a toroidal pore in membranes), and potenially homomultimer (as a toroidal pore in membranes). In terms of tissue distribution, expressed by the venom gland.

The protein resides in the secreted. The protein localises to the target cell membrane. Functionally, main toxin of bee venom with strong hemolytic activity and antimicrobial activity. It has enhancing effects on bee venom phospholipase A2 activity. This amphipathic toxin binds to negatively charged membrane surface and forms pore by inserting into lipid bilayers inducing the leakage of ions and molecules and the enhancement of permeability that ultimately leads to cell lysis. It acts as a voltage-gated pore with higher selectivity for anions over cations. The ion conductance has been shown to be voltage-dependent. Self-association of melittin in membranes is promoted by high ionic strength, but not by the presence of negatively charged lipids. In vivo, intradermal injection into healthy human volunteers produce sharp pain sensation and an inflammatory response. It produces pain by activating primary nociceptor cells directly and indirectly due to its ability to activate plasma membrane phospholipase A2 and its pore-forming activity. This Apis cerana cerana (Oriental honeybee) protein is Melittin (MELT).